We begin with the raw amino-acid sequence, 429 residues long: MTSYSLFWMSLLKNNWKPISNDFVICLWTLAVTFIRIYWIFFVPLEWKKDLDNEKWSFLRKTENVVCYNHKRDTINRLRKLKIQKIIELPPPYPNGWYGILKSSQLKAGEATCVSCLGEDLVIFRSKKDIVFILDAYCPHLGANLGIGGSVADDCVICPFHQWKFRGTDGLCINIPYSTSVPKGSKLKKWISQEVDGFIFIWYHAEQTELPWDLPVPMGEIDDTFVYHGHNEFYINCHIQEIPENGADIAHFNAIHKKNFINGSWAQKKRLFGLGSHHWKARWSPFTGKLKYLAEVNLSHTFKLFGKFGCFRMEVSGKQIGPSIVCLEVNSYTFGKIKVFQYITPIEPMLQKVVHEFYGPRWIAPLMKIFIYGESLMFERDIKIWNHKVFNRNPILAKEDASIKKFRLWFSQFYSSNSKIYSEATNIGW.

A helical membrane pass occupies residues 23–43; sequence FVICLWTLAVTFIRIYWIFFV. Positions 98–201 constitute a Rieske domain; it reads YGILKSSQLK…SQEVDGFIFI (104 aa). Cys-138, His-140, Cys-158, and His-161 together coordinate [2Fe-2S] cluster.

It belongs to the cholesterol 7-desaturase family. [2Fe-2S] cluster serves as cofactor. In terms of tissue distribution, expressed predominantly in the prothoracic gland and weakly in brain and malpighian tubules.

It is found in the membrane. It carries out the reaction cholesterol + NADPH + O2 + H(+) = 7-dehydrocholesterol + NADP(+) + 2 H2O. The enzyme catalyses cholesterol + NADH + O2 + H(+) = 7-dehydrocholesterol + NAD(+) + 2 H2O. The protein operates within steroid hormone biosynthesis; dafachronic acid biosynthesis. Catalyzes the production of 7-dehydrocholesterol (7-DHC or cholesta-5,7-dien-3beta-ol) by inserting a double bond (desaturating) at the C7-C8 single bond of cholesterol. Essential regulator of steroid biosynthesis, as this reaction is the first step in the synthesis of the steroid hormone Delta(7)-dafachronic acid. Required for insect molting, metamorphosis and body growth throughout development via the regulation of ecdysteroid biosynthesis in the prothoracic gland. The chain is Cholesterol 7-desaturase nvd from Drosophila melanogaster (Fruit fly).